The chain runs to 434 residues: Gamma-enolase (434 aa).

An N-acetylserine modification is found at Ser2. At Lys5 the chain carries N6-acetyllysine. Thr26 is subject to Phosphothreonine. Mg(2+) is bound at residue Ser40. A Phosphotyrosine modification is found at Tyr44. Residue Lys60 is modified to N6-acetyllysine; alternate. N6-succinyllysine; alternate is present on Lys60. Residue Lys64 is modified to N6-acetyllysine. Residue Lys89 is modified to N6-acetyllysine; alternate. Lys89 is subject to N6-succinyllysine; alternate. Substrate is bound by residues His158 and Glu167. N6-acetyllysine is present on residues Lys193, Lys197, and Lys199. Lys202 is modified (N6-acetyllysine; alternate). Lys202 is covalently cross-linked (Glycyl lysine isopeptide (Lys-Gly) (interchain with G-Cter in SUMO2); alternate). Glu210 acts as the Proton donor in catalysis. N6-acetyllysine; alternate occurs at positions 228 and 233. Lys228 carries the post-translational modification N6-succinyllysine; alternate. At Lys233 the chain carries N6-(2-hydroxyisobutyryl)lysine; alternate. Asp245 lines the Mg(2+) pocket. Residue Lys256 is modified to N6-acetyllysine. Residue Ser263 is modified to Phosphoserine. Phosphotyrosine is present on Tyr287. At Ser291 the chain carries Phosphoserine. Glu293 and Asp318 together coordinate Mg(2+). Substrate contacts are provided by Glu293 and Asp318. N6-acetyllysine occurs at positions 335 and 343. Catalysis depends on Lys343, which acts as the Proton acceptor. Substrate is bound by residues 370–373 (SHRS) and Lys394. Lys406 bears the N6-acetyllysine mark.

It belongs to the enolase family. In terms of assembly, mammalian enolase is composed of 3 isozyme subunits, alpha, beta and gamma, which can form homodimers or heterodimers which are cell-type and development-specific. Mg(2+) is required as a cofactor. In terms of tissue distribution, the alpha/alpha homodimer is expressed in embryo and in most adult tissues. The alpha/beta heterodimer and the beta/beta homodimer are found in striated muscle, and the alpha/gamma heterodimer and the gamma/gamma homodimer in neurons.

Its subcellular location is the cytoplasm. It localises to the cell membrane. The enzyme catalyses (2R)-2-phosphoglycerate = phosphoenolpyruvate + H2O. The protein operates within carbohydrate degradation; glycolysis; pyruvate from D-glyceraldehyde 3-phosphate: step 4/5. Functionally, has neurotrophic and neuroprotective properties on a broad spectrum of central nervous system (CNS) neurons. Binds, in a calcium-dependent manner, to cultured neocortical neurons and promotes cell survival. This chain is Gamma-enolase (ENO2), found in Homo sapiens (Human).